A 224-amino-acid polypeptide reads, in one-letter code: Ribosomal RNA large subunit methyltransferase E (224 aa).

S-adenosyl-L-methionine is bound by residues glycine 60, tryptophan 62, aspartate 93, aspartate 109, and aspartate 137. Catalysis depends on lysine 177, which acts as the Proton acceptor.

This sequence belongs to the class I-like SAM-binding methyltransferase superfamily. RNA methyltransferase RlmE family.

It is found in the cytoplasm. It catalyses the reaction uridine(2552) in 23S rRNA + S-adenosyl-L-methionine = 2'-O-methyluridine(2552) in 23S rRNA + S-adenosyl-L-homocysteine + H(+). Its function is as follows. Specifically methylates the uridine in position 2552 of 23S rRNA at the 2'-O position of the ribose in the fully assembled 50S ribosomal subunit. This is Ribosomal RNA large subunit methyltransferase E from Polynucleobacter asymbioticus (strain DSM 18221 / CIP 109841 / QLW-P1DMWA-1) (Polynucleobacter necessarius subsp. asymbioticus).